Here is a 780-residue protein sequence, read N- to C-terminus: Cullin-5 (780 aa).

Ser34 carries the phosphoserine modification. Thr210 carries the phosphothreonine modification. The 60-residue stretch at 713–772 (LRTRKLYIQIMKMRKKISNAQLQTELVEILKNMFLPQKKMIKEQIEWLIEHKYIRRDESD) folds into the Cullin neddylation domain. Lys724 participates in a covalent cross-link: Glycyl lysine isopeptide (Lys-Gly) (interchain with G-Cter in NEDD8).

It belongs to the cullin family. As to quaternary structure, component of multiple cullin-5-RING E3 ubiquitin-protein ligase complexes (ECS complexes, also named CRL5 complexes) formed of CUL5, Elongin BC (ELOB and ELOC), RNF7/RBX2 and a variable SOCS box domain-containing protein as substrate-specific recognition component. CUL5-containing ECS complexes specifically contain RNF7/RBX2, and not RBX1, as catalytic subunit. Component of the ECS(ASB2) complex with the substrate recognition component ASB2. Component of the ECS(ASB6) complex with the substrate recognition component ASB6. Component of the ECS(ASB7) complex with the substrate recognition component ASB7. Component of the ECS(ASB9) complex with the substrate recognition component ASB9. Component of the ECS(ASB11) complex with the substrate recognition component ASB11. Component of the ECS(ASB12) complex with the substrate recognition component ASB12. Component of the ECS(LRRC41) complex with the substrate recognition component LRRC41. Component of the ECS(SOCS1) complex with the substrate recognition component SOCS1. Component of the ECS(SOCS2) complex with the substrate recognition component SOCS2. Component of the ECS(WSB1) complex with the substrate recognition subunit WSB1. Component of the ECS(SOCS3) complex with the substrate recognition component SOCS3. Component of the ECS(SOCS7) complex with the substrate recognition component SOCS7. Component of the ECS(SPSB1) complex with the substrate recognition component SPSB1. Component of the ECS(SPSB3) complex with the substrate recognition component SPSB3. Component of the ECS(SPSB2) complex with the substrate recognition component SPSB2. Component of the ECS(SPSB4) complex with the substrate recognition component SPSB4. Component of the ECS(RAB40) complex with the substrate recognition subunit RAB40A, RAB40B or RAB40C. Component of the ECS(KLHDC1) complex with the substrate recognition component KLHDC1. Component of the ECS(PCMTD1) complex with the substrate recognition subunit PCMTD1. May also form complexes containing RBX1 and ELOA or VHL; additional evidence is however required to confirm this result in vivo. Interacts (when neddylated) with ARIH2; leading to activate the E3 ligase activity of ARIH2. Interacts with ERCC6; the interaction is induced by DNA damaging agents or inhibitors of RNA polymerase II elongation. Interacts with ELOA (via the BC-box). Interacts (unneddylated form) with DCUN1D1, DCUN1D2, DCUN1D3, DCUN1D4 and DCUN1D5; these interactions promote the cullin neddylation. Post-translationally, neddylated; which enhances the ubiquitination activity of ECS complexes and prevents binding of the inhibitor CAND1. Deneddylated via its interaction with the COP9 signalosome (CSN). Kidney collecting tubules.

It is found in the nucleus. Its pathway is protein modification; protein ubiquitination. In terms of biological role, core component of multiple cullin-5-RING E3 ubiquitin-protein ligase complexes (ECS complexes, also named CRL5 complexes), which mediate the ubiquitination and subsequent proteasomal degradation of target proteins. Acts a scaffold protein that contributes to catalysis through positioning of the substrate and the ubiquitin-conjugating enzyme. The functional specificity of the E3 ubiquitin-protein ligase complex depends on the variable SOCS box-containing substrate recognition component. Acts as a key regulator of neuron positioning during cortex development: component of various SOCS-containing ECS complexes, such as the ECS(SOCS7) complex, that regulate reelin signaling by mediating ubiquitination and degradation of DAB1. ECS(SOCS1) seems to direct ubiquitination of JAK2. The ECS(SOCS2) complex mediates the ubiquitination and subsequent proteasomal degradation of phosphorylated EPOR and GHR. The ECS(SPSB3) complex catalyzes ubiquitination of nuclear CGAS. ECS(KLHDC1) complex is part of the DesCEND (destruction via C-end degrons) pathway and mediates ubiquitination and degradation of truncated SELENOS selenoprotein produced by failed UGA/Sec decoding, which ends with a glycine. The ECS(ASB9) complex mediates ubiquitination and degradation of CKB. As part of some ECS complex, promotes 'Lys-11'-linked ubiquitination and degradation of BTRC. As part of a multisubunit ECS complex, polyubiquitinates monoubiquitinated POLR2A. As part of the ECS(RAB40C) complex, mediates ANKRD28 ubiquitination and degradation, thereby regulating protein phosphatase 6 (PP6) complex activity and focal adhesion assembly during cell migration. As part of the ECS(RAB40A) complex, mediates RHOU 'Lys-48'-linked ubiquitination and degradation, thus inhibiting focal adhesion disassembly during cell migration. As part of the ECS(RAB40B) complex, mediates LIMA1/EPLIN and RAP2 ubiquitination, thereby regulating actin cytoskeleton dynamics and stress fiber formation during cell migration. May form a cell surface vasopressin receptor. The polypeptide is Cullin-5 (CUL5) (Oryctolagus cuniculus (Rabbit)).